A 226-amino-acid polypeptide reads, in one-letter code: Survival motor neuron protein (226 aa).

A compositionally biased stretch (basic and acidic residues) spans 35–44 (ADSTNKREEE). Residues 35–68 (ADSTNKREEENAAAAEEEAGEISATGGATSPEPV) are disordered. The Tudor domain occupies 69–128 (SFKVGDYARATYVDGVDYEGAVVSINEEKGTCVLRYLGYENEQEVLLVDLLPSWGKRVRR). The tract at residues 137 to 172 (DEDEQLSRPKASAGSHSKTPKSSRRSRISGGLVMPP) is disordered. Residues 154–163 (KTPKSSRRSR) show a composition bias toward basic residues. The segment at 159-226 (SRRSRISGGL…TSGKKKTPKK (68 aa)) is required for homodimerization.

The protein belongs to the SMN family. Homodimer (via C-terminal region). Component of the core survival motor neuron (SMN) complex composed of Smn, Gem2, Gem3, rig/Gem5 and one of 3 almost identical Gem4 paralogs encoded by Glos/Gem4a, Gem4b or Gem4c. Interacts with Gem3 (via C-terminus); the interaction is direct and stabilizes Smn. Part of a minimal SMN complex composed of Smn and Gem2 only; this complex is active in UsnRNP assembly. The SMN complex associates with the entire set of spliceosomal snRNP Sm proteins, SmB, SmD1, SmD2, SmD3, SmE, SmF and SmG, and with the snRNP-specific proteins snRNP-U1-70K, U2A, snf/U1A and U5-116KD. Interacts with Glos/Gem4a; the interaction is probably indirect. Interacts with Sbat and Vlet; Sbat and Vlet, along with Hez, may form an accessory subcomplex involved in SMN complex function. Interacts weakly with Gem3. Interacts with SmB and SmD1; the interaction is favored by methylation of the Sm proteins. Interacts with Actn; the interaction occurs in thoracic tissues and in adult flies. Interacts with Rpp20. Interacts with msk and Snup; these interactions are RNA-dependent. As to expression, in late first instar larvae, expressed in pNBs. Expression increases as the pNBs enlarge, with the highest accumulation observed in dividing pNBs of second and third instar larvae. Enriched in type ID (thoracic and brain lobe), type IA and all the mira-expressing NBs of the brain lobes. In larvae, also expressed in muscle fibers. In larval and adult testis, expressed in germline stem cells and gonialblast, expression decreases as cells differentiate into cysts and spermatocytes. In adult fly thorax, expressed in the IFMs. In adult ovary, expressed in germline stem cells, cystoblasts, follicle cells, nurse cells and oocyte (at protein level). Also expressed in larval salivary glands.

Its subcellular location is the cytoplasm. It is found in the nucleus. It localises to the U-body. The protein localises to the gem. The protein resides in the cajal body. Its subcellular location is the myofibril. It is found in the sarcomere. It localises to the i band. The protein localises to the z line. In terms of biological role, core component of the survival motor neuron (SMN) complex that plays an essential role in spliceosomal small nuclear ribonucleoprotein (snRNP) assembly in the cytoplasm, is required for pre-mRNA splicing in the nucleus and acts as a chaperone that discriminates target and non-target RNAs of Sm proteins. A major component of nuclear bodies known as gems (gemini of Cajal bodies) thought to be storage depots of excess SMN complexes. Required for normal expression of spliceosomal snRNAs and for U12 intron splicing. Required in cholinergic neurons, but not in motor neurons, to ensure correct splicing and proper levels of stas mRNA and normal neurotransmitter release by motor neurons. However, Smn is required in motor neurons, but not in cholinergic neurons, for normal motor behavior but plays no role in synaptic transmission according to a report. In both muscle and neurons, required for the formation of a normal neuromuscular junction (NMJ) structure. Plays a neuron-specific role in long-term homeostatic compensation at the larval NMJ. In the thorax of adult flies, required for Act88F, an indirect flight muscle (IFM)-specific actin, expression and for proper IFM myofibril formation. In nurse cells, oocytes and follicle cells, required to maintain normal organization of nuclear compartments including chromosomes, nucleoli, Cajal bodies, histone locus bodies and heterochromatin. Required for the functional integrity of the cytoplasmic U snRNP body (U body) and P body. Required in dividing postembryonic neuroblasts (pNBs) for the correct basal localization of mira. The tight regulation of its expression is critical for stem cell division, proliferation and differentiation in male germline and developing central nervous system (CNS). Required for tracheal terminal cell lumen formation. The polypeptide is Survival motor neuron protein (Drosophila melanogaster (Fruit fly)).